A 111-amino-acid polypeptide reads, in one-letter code: Large ribosomal subunit protein uL22 (111 aa).

This sequence belongs to the universal ribosomal protein uL22 family. In terms of assembly, part of the 50S ribosomal subunit.

Its function is as follows. This protein binds specifically to 23S rRNA; its binding is stimulated by other ribosomal proteins, e.g. L4, L17, and L20. It is important during the early stages of 50S assembly. It makes multiple contacts with different domains of the 23S rRNA in the assembled 50S subunit and ribosome. Functionally, the globular domain of the protein is located near the polypeptide exit tunnel on the outside of the subunit, while an extended beta-hairpin is found that lines the wall of the exit tunnel in the center of the 70S ribosome. This Chlamydia felis (strain Fe/C-56) (Chlamydophila felis) protein is Large ribosomal subunit protein uL22.